Reading from the N-terminus, the 336-residue chain is Acetyl-coenzyme A carboxylase carboxyl transferase subunit alpha (336 aa).

A CoA carboxyltransferase C-terminal domain is found at 48–308 (ALEAKVESLR…KSMLIEELQG (261 aa)).

This sequence belongs to the AccA family. In terms of assembly, acetyl-CoA carboxylase is a heterohexamer composed of biotin carboxyl carrier protein (AccB), biotin carboxylase (AccC) and two subunits each of ACCase subunit alpha (AccA) and ACCase subunit beta (AccD).

The protein localises to the cytoplasm. It carries out the reaction N(6)-carboxybiotinyl-L-lysyl-[protein] + acetyl-CoA = N(6)-biotinyl-L-lysyl-[protein] + malonyl-CoA. It participates in lipid metabolism; malonyl-CoA biosynthesis; malonyl-CoA from acetyl-CoA: step 1/1. Its function is as follows. Component of the acetyl coenzyme A carboxylase (ACC) complex. First, biotin carboxylase catalyzes the carboxylation of biotin on its carrier protein (BCCP) and then the CO(2) group is transferred by the carboxyltransferase to acetyl-CoA to form malonyl-CoA. The sequence is that of Acetyl-coenzyme A carboxylase carboxyl transferase subunit alpha from Chlorobaculum parvum (strain DSM 263 / NCIMB 8327) (Chlorobium vibrioforme subsp. thiosulfatophilum).